The following is an 867-amino-acid chain: Valine--tRNA ligase (867 aa).

Positions 42 to 52 (PNITGKIHMGH) match the 'HIGH' region motif. The 'KMSKS' region motif lies at 521 to 525 (KMSKS). Position 524 (lysine 524) interacts with ATP. A coiled-coil region spans residues 794–867 (LGTLIDVKSE…QIISDLEAKA (74 aa)).

Belongs to the class-I aminoacyl-tRNA synthetase family. ValS type 1 subfamily. In terms of assembly, monomer.

Its subcellular location is the cytoplasm. The enzyme catalyses tRNA(Val) + L-valine + ATP = L-valyl-tRNA(Val) + AMP + diphosphate. Functionally, catalyzes the attachment of valine to tRNA(Val). As ValRS can inadvertently accommodate and process structurally similar amino acids such as threonine, to avoid such errors, it has a 'posttransfer' editing activity that hydrolyzes mischarged Thr-tRNA(Val) in a tRNA-dependent manner. This chain is Valine--tRNA ligase, found in Fervidobacterium nodosum (strain ATCC 35602 / DSM 5306 / Rt17-B1).